The primary structure comprises 258 residues: Acyl-[acyl-carrier-protein]--UDP-N-acetylglucosamine O-acyltransferase (258 aa).

It belongs to the transferase hexapeptide repeat family. LpxA subfamily. Homotrimer.

The protein localises to the cytoplasm. The catalysed reaction is a (3R)-hydroxyacyl-[ACP] + UDP-N-acetyl-alpha-D-glucosamine = a UDP-3-O-[(3R)-3-hydroxyacyl]-N-acetyl-alpha-D-glucosamine + holo-[ACP]. It functions in the pathway glycolipid biosynthesis; lipid IV(A) biosynthesis; lipid IV(A) from (3R)-3-hydroxytetradecanoyl-[acyl-carrier-protein] and UDP-N-acetyl-alpha-D-glucosamine: step 1/6. Its function is as follows. Involved in the biosynthesis of lipid A, a phosphorylated glycolipid that anchors the lipopolysaccharide to the outer membrane of the cell. The protein is Acyl-[acyl-carrier-protein]--UDP-N-acetylglucosamine O-acyltransferase of Pseudomonas syringae pv. tomato (strain ATCC BAA-871 / DC3000).